The sequence spans 212 residues: External core antigen (212 aa).

The signal sequence occupies residues 1–19; sequence MQLFPLCLIISCSCPTVQA. An HBEAG region spans residues 25–27; that stretch reads GWL. Residues 165-212 form a disordered region; it reads NAPILSTLPETTVVRRRGRSPRRRTPSPRRRRSQSPRRRRSQSRESQC. Over residues 178-205 the composition is skewed to basic residues; it reads VRRRGRSPRRRTPSPRRRRSQSPRRRRS. The 1; half-length repeat unit spans residues 184–190; it reads SPRRRTP. The 3 X 8 AA repeats of S-P-R-R-R-R-S-Q stretch occupies residues 184-206; the sequence is SPRRRTPSPRRRRSQSPRRRRSQ. Tandem repeats lie at residues 191 to 198 and 199 to 206.

Belongs to the orthohepadnavirus precore antigen family. Homodimerizes. In terms of processing, phosphorylated. Post-translationally, cleaved by host furin.

It is found in the secreted. The protein resides in the host nucleus. May regulate immune response to the intracellular capsid in acting as a T-cell tolerogen, by having an immunoregulatory effect which prevents destruction of infected cells by cytotoxic T-cells. This immune regulation may predispose to chronicity during perinatal infections and prevent severe liver injury during adult infections. The protein is External core antigen of Hepatitis B virus genotype C subtype ayr (isolate Human/Japan/Okamoto/-) (HBV-C).